Consider the following 95-residue polypeptide: Glutamyl-tRNA(Gln) amidotransferase subunit C 1 (95 aa).

This sequence belongs to the GatC family. As to quaternary structure, heterotrimer of A, B and C subunits.

It catalyses the reaction L-glutamyl-tRNA(Gln) + L-glutamine + ATP + H2O = L-glutaminyl-tRNA(Gln) + L-glutamate + ADP + phosphate + H(+). The catalysed reaction is L-aspartyl-tRNA(Asn) + L-glutamine + ATP + H2O = L-asparaginyl-tRNA(Asn) + L-glutamate + ADP + phosphate + 2 H(+). Functionally, allows the formation of correctly charged Asn-tRNA(Asn) or Gln-tRNA(Gln) through the transamidation of misacylated Asp-tRNA(Asn) or Glu-tRNA(Gln) in organisms which lack either or both of asparaginyl-tRNA or glutaminyl-tRNA synthetases. The reaction takes place in the presence of glutamine and ATP through an activated phospho-Asp-tRNA(Asn) or phospho-Glu-tRNA(Gln). This Clostridium acetobutylicum (strain ATCC 824 / DSM 792 / JCM 1419 / IAM 19013 / LMG 5710 / NBRC 13948 / NRRL B-527 / VKM B-1787 / 2291 / W) protein is Glutamyl-tRNA(Gln) amidotransferase subunit C 1 (gatC1).